The chain runs to 287 residues: MSNYPKRIYVLPARHVAAPQPQRMAPKRALPTEQVVAQLLGDDMGPSGPRKRERLNHLSQEEKMDRRKLKNRVAAQNARDKKKERSAKIEDVMRDLVEENRRLRAENERLRRQNKNLMNQQNESVMYMEENNENLMNSNDACIYQNVVYEEEVVGEVAPVVVVGGEDRRAFESAAFINEPQQWEQARSTSINNNISNQLRRMDSKKNNTISVDMYLTIISILCNHMDRNKKMDTSNKSSNISRAQAESSIDSLLATLRKEQTVMQRLVQADPCTHLQKRVKHFRRIP.

Residues 61–117 (EEKMDRRKLKNRVAAQNARDKKKERSAKIEDVMRDLVEENRRLRAENERLRRQNKNL) form the bZIP domain. Residues 63–87 (KMDRRKLKNRVAAQNARDKKKERSA) form a disordered region. The segment at 63–88 (KMDRRKLKNRVAAQNARDKKKERSAK) is basic motif. The segment covering 78–87 (ARDKKKERSA) has biased composition (basic and acidic residues). A leucine-zipper region spans residues 89 to 117 (IEDVMRDLVEENRRLRAENERLRRQNKNL).

As to quaternary structure, interacts with SUMO-conjugating enzyme ubc-9; the interaction is direct. In terms of processing, sumoylated. Sumoylation may negatively modulate the transcription of genes involved in the ER-stress-response.

It is found in the nucleus. In terms of biological role, required for transcriptional regulation of the unfolded protein response (UPR) in the endoplasmic reticulum (ER) under stressed conditions, acting downstream of ire-1, and also maintaining ER homeostasis via a negative feedback loop, in parallel with ER kinase pek-1. May also regulate Golgi protein trafficking distal to the ER. Protects the host organism from the detrimental effects of mounting an innate immune response to microbes, such as the Gram-negative bacterium P.aeruginosa, probably by modulating the UPR. Plays a role in the unconventional cytoplasmic splicing processing of its own mRNA triggered by the endoplasmic reticulum (ER) transmembrane endoribonuclease ire-1: upon ER stress, the emerging xbp-1 polypeptide chain, as part of a mRNA-ribosome-nascent chain (R-RNC) complex, cotranslationally recruits its own unprocessed mRNA through transient docking to the ER membrane and translational pausing, therefore facilitating efficient ire-1-mediated xbp-1 mRNA isoform 2 production. Its function is as follows. Functions as a stress-inducible potent transcriptional activator during endoplasmic reticulum (ER) stress by inducing unfolded protein response (UPR) target genes via binding to the UPR element (UPRE). Plays a role in modulation of the UPR, lipid metabolism, proteostasis, and lifespan. In neurons, rescues stress resistance, increases longevity, and, drives expression of lysosomal genes in the intestine and activates the UPR in distal, non-neuronal cell types through a cell-nonautonomous mechanism. In neurons or intestine, plays a role in protection against proteotoxicity, acting via positive modulation of genes involved in lysosomal function, including lipases and the fatty-acid desaturase fat-6. Protection against proteotoxicity in neurons is dependent upon the transcription factor atf-6. This Caenorhabditis elegans protein is X-box-binding protein 1.